Here is a 746-residue protein sequence, read N- to C-terminus: Ferrienterobactin receptor (746 aa).

The signal sequence occupies residues 1-22 (MNKKIHSLALLVNLGIYGVAQA). The TonB box motif lies at 34–41 (DTIVVTAA). The 128-residue stretch at 42 to 169 (EQNLQAPGVS…AGGVVNIITK (128 aa)) folds into the TBDR plug domain. A disordered region spans residues 76-96 (GVNLTGNSTSGQRGNNRQIDI). Residues 79-93 (LTGNSTSGQRGNNRQ) show a composition bias toward polar residues. Residues 174–746 (EWHGSWDAYF…TWYMSVNTHF (573 aa)) enclose the TBDR beta-barrel domain. Residues 729-746 (YTYNEPGRTWYMSVNTHF) carry the TonB C-terminal box motif.

It belongs to the TonB-dependent receptor family.

It is found in the cell outer membrane. Functionally, this protein is involved in the initial step of iron uptake by binding ferrienterobactin (Fe-ENT), an iron chelatin siderophore that allows E.coli to extract iron from the environment. FepA also acts as a receptor for colicins B and D. The protein is Ferrienterobactin receptor (fepA) of Escherichia coli (strain K12).